Consider the following 819-residue polypeptide: Metabotropic glutamate receptor-like protein O (819 aa).

The signal sequence occupies residues 1–19 (MKKVFFLILILNCVVGALS). The Extracellular portion of the chain corresponds to 20-394 (NKNICKISLL…FVDSYSNSIK (375 aa)). Asparagine 99, asparagine 185, asparagine 277, asparagine 295, asparagine 330, and asparagine 370 each carry an N-linked (GlcNAc...) asparagine glycan. The chain crosses the membrane as a helical span at residues 395–415 (ISILSVSIFCIFICVLGMIFI). At 416–428 (TVLRNARILKSSS) the chain is on the cytoplasmic side. The helical transmembrane segment at 429–449 (PSFLLLILFGCIVIFTGCILF) threads the bilayer. At 450 to 457 (SQPATDKT) the chain is on the extracellular side. A helical membrane pass occupies residues 458-478 (CQGRVWLLSIGYTIFLGSLLI). The Cytoplasmic segment spans residues 479–503 (KNWRVWLLFDNKKLRKRSITNWKLY). The chain crosses the membrane as a helical span at residues 504-524 (PWVAGILVVDVLILALWQGLG). The Extracellular segment spans residues 525–550 (DIKSESRIIGTSFYQYTNVCTNNDQG). The helical transmembrane segment at 551–571 (SIALYILLAFHGLKLLGTCFI) threads the bilayer. At 572-587 (SFKIKLVDIEEFNESK) the chain is on the cytoplasmic side. The chain crosses the membrane as a helical span at residues 588-608 (PITTSVFIILFCIFTIILLIA). Topologically, residues 609-624 (PSSSSSSASSPQPIAS) are extracellular. A helical transmembrane segment spans residues 625–645 (LETIICICSVTTTAISIGLLF). The Cytoplasmic portion of the chain corresponds to 646-819 (GDKIYFITTQ…NNENEIISDT (174 aa)). The segment at 674–819 (KDCDDDDDDS…NNENEIISDT (146 aa)) is disordered. Residues 695–712 (NKNKNKNRNQSEKKKRPN) show a composition bias toward basic residues. A compositionally biased stretch (polar residues) spans 726 to 739 (ESVVFNPPSNNDLT). Over residues 748-768 (GIKEGHGHDSENNDEYEHHED) the composition is skewed to basic and acidic residues. The segment covering 769 to 798 (EDHEYEGEGEDEDHEDEYEVENDIEQEQEQ) has biased composition (acidic residues). Over residues 799–808 (ESSNISISTK) the composition is skewed to low complexity.

In the N-terminal section; belongs to the BMP lipoprotein family. This sequence in the C-terminal section; belongs to the G-protein coupled receptor 3 family. GABA-B receptor subfamily.

The protein localises to the membrane. This chain is Metabotropic glutamate receptor-like protein O (grlO), found in Dictyostelium discoideum (Social amoeba).